We begin with the raw amino-acid sequence, 78 residues long: U-scoloptoxin(04)-Er1e (78 aa).

A signal peptide spans Met1 to Ala24. Positions Arg25–Arg28 are excised as a propeptide.

The protein belongs to the scoloptoxin-04 family. Contains 2 disulfide bonds. In terms of tissue distribution, expressed by the venom gland.

The protein localises to the secreted. This chain is U-scoloptoxin(04)-Er1e, found in Ethmostigmus rubripes (Giant centipede).